Here is a 210-residue protein sequence, read N- to C-terminus: MDFYYLPLSAPCRSVIMTAKALGIELNKKLLNLFEGEHLKPEFLKINPQHTIPTLVDNGFAMWESRAIMVYLVEKYGKQNDPLYPSCPKKRALINQRLYFDMGTLWKSYADYTYPQFRENKPADPELFKKFESALEFLNIFLSQSKYAAGETMTLADLAILASVSTFDVVQMDLSKYEHILRWYNMLKDTAPGAAENWAGCLEMKKYFKK.

Residues 1 to 80 (MDFYYLPLSA…YLVEKYGKQN (80 aa)) enclose the GST N-terminal domain. Glutathione-binding positions include S9, 50–52 (HTI), and 64–66 (ESR). A GST C-terminal domain is found at 87–208 (CPKKRALINQ…AGCLEMKKYF (122 aa)).

The protein belongs to the GST superfamily. Theta family. Homodimer.

It catalyses the reaction RX + glutathione = an S-substituted glutathione + a halide anion + H(+). Functionally, conjugation of reduced glutathione to a wide number of exogenous and endogenous hydrophobic electrophiles. In Musca domestica (House fly), this protein is Glutathione S-transferase 2 (Gst2).